Consider the following 293-residue polypeptide: Ribosomal protein L11 methyltransferase (293 aa).

Positions 145, 166, 188, and 230 each coordinate S-adenosyl-L-methionine.

This sequence belongs to the methyltransferase superfamily. PrmA family.

It is found in the cytoplasm. It carries out the reaction L-lysyl-[protein] + 3 S-adenosyl-L-methionine = N(6),N(6),N(6)-trimethyl-L-lysyl-[protein] + 3 S-adenosyl-L-homocysteine + 3 H(+). Its function is as follows. Methylates ribosomal protein L11. The sequence is that of Ribosomal protein L11 methyltransferase from Salmonella dublin (strain CT_02021853).